The sequence spans 140 residues: Cysteine desulfuration protein SufE (140 aa).

Residue cysteine 51 is the Cysteine persulfide intermediate of the active site.

This sequence belongs to the SufE family. In terms of assembly, homodimer. Interacts with SufS.

It localises to the cytoplasm. The protein operates within cofactor biosynthesis; iron-sulfur cluster biosynthesis. Its function is as follows. Participates in cysteine desulfuration mediated by SufS. Cysteine desulfuration mobilizes sulfur from L-cysteine to yield L-alanine and constitutes an essential step in sulfur metabolism for biosynthesis of a variety of sulfur-containing biomolecules. Functions as a sulfur acceptor for SufS, by mediating the direct transfer of the sulfur atom from the S-sulfanylcysteine of SufS, an intermediate product of cysteine desulfuration process. This is Cysteine desulfuration protein SufE from Yersinia enterocolitica serotype O:8 / biotype 1B (strain NCTC 13174 / 8081).